A 141-amino-acid chain; its full sequence is Nucleoside diphosphate kinase (141 aa).

K11, F59, R87, T93, R104, and N114 together coordinate ATP. The active-site Pros-phosphohistidine intermediate is H117.

This sequence belongs to the NDK family. Homotetramer. It depends on Mg(2+) as a cofactor.

Its subcellular location is the cytoplasm. The catalysed reaction is a 2'-deoxyribonucleoside 5'-diphosphate + ATP = a 2'-deoxyribonucleoside 5'-triphosphate + ADP. It catalyses the reaction a ribonucleoside 5'-diphosphate + ATP = a ribonucleoside 5'-triphosphate + ADP. Functionally, major role in the synthesis of nucleoside triphosphates other than ATP. The ATP gamma phosphate is transferred to the NDP beta phosphate via a ping-pong mechanism, using a phosphorylated active-site intermediate. The chain is Nucleoside diphosphate kinase from Delftia acidovorans (strain DSM 14801 / SPH-1).